The sequence spans 309 residues: tRNA pseudouridine synthase B (309 aa).

D39 serves as the catalytic Nucleophile. A PUA domain is found at 229-306; the sequence is LPRVVVHQES…ERVLTLRKVF (78 aa).

The protein belongs to the pseudouridine synthase TruB family. Type 1 subfamily.

It catalyses the reaction uridine(55) in tRNA = pseudouridine(55) in tRNA. In terms of biological role, responsible for synthesis of pseudouridine from uracil-55 in the psi GC loop of transfer RNAs. The polypeptide is tRNA pseudouridine synthase B (Thermotoga petrophila (strain ATCC BAA-488 / DSM 13995 / JCM 10881 / RKU-1)).